The following is a 420-amino-acid chain: Serine--tRNA ligase (420 aa).

227–229 (TSE) lines the L-serine pocket. ATP is bound by residues 258-260 (RRE) and Val-274. Glu-281 is an L-serine binding site. ATP is bound at residue 345–348 (EVTS). L-serine is bound at residue Thr-379.

This sequence belongs to the class-II aminoacyl-tRNA synthetase family. Type-1 seryl-tRNA synthetase subfamily. Homodimer. The tRNA molecule binds across the dimer.

It is found in the cytoplasm. The catalysed reaction is tRNA(Ser) + L-serine + ATP = L-seryl-tRNA(Ser) + AMP + diphosphate + H(+). The enzyme catalyses tRNA(Sec) + L-serine + ATP = L-seryl-tRNA(Sec) + AMP + diphosphate + H(+). Its pathway is aminoacyl-tRNA biosynthesis; selenocysteinyl-tRNA(Sec) biosynthesis; L-seryl-tRNA(Sec) from L-serine and tRNA(Sec): step 1/1. Its function is as follows. Catalyzes the attachment of serine to tRNA(Ser). Is also able to aminoacylate tRNA(Sec) with serine, to form the misacylated tRNA L-seryl-tRNA(Sec), which will be further converted into selenocysteinyl-tRNA(Sec). The polypeptide is Serine--tRNA ligase (Acidothermus cellulolyticus (strain ATCC 43068 / DSM 8971 / 11B)).